The chain runs to 115 residues: MNLMLALLTNFTLATLLVIIAFWLPQLNVYSEKTSPYECGFDPMGSARLPFSMKFFLVAITFLLFDLEIALLLPLPWASQTANLNTMLTMALFLIILLAVSLAYEWTQKGLEWTE.

M1 carries the N-formylmethionine modification. Helical transmembrane passes span 3–23 (LMLA…IAFW), 55–75 (FFLV…LLPL), and 84–104 (LNTM…SLAY).

As to quaternary structure, core subunit of respiratory chain NADH dehydrogenase (Complex I) which is composed of 45 different subunits. Interacts with TMEM186. Interacts with TMEM242.

The protein resides in the mitochondrion inner membrane. The enzyme catalyses a ubiquinone + NADH + 5 H(+)(in) = a ubiquinol + NAD(+) + 4 H(+)(out). Functionally, core subunit of the mitochondrial membrane respiratory chain NADH dehydrogenase (Complex I) which catalyzes electron transfer from NADH through the respiratory chain, using ubiquinone as an electron acceptor. Essential for the catalytic activity of complex I. This chain is NADH-ubiquinone oxidoreductase chain 3, found in Bos taurus (Bovine).